The primary structure comprises 580 residues: Phosphomethylpyrimidine synthase (580 aa).

The interval Met1–Leu58 is disordered. Residues Asn180, Met209, Tyr238, His274, Ser294–Gly296, Asp335–Arg338, and Glu374 contribute to the substrate site. Position 378 (His378) interacts with Zn(2+). Tyr401 contributes to the substrate binding site. His442 lines the Zn(2+) pocket. Positions 522, 525, and 530 each coordinate [4Fe-4S] cluster. The tract at residues Val554–Glu580 is disordered.

It belongs to the ThiC family. It depends on [4Fe-4S] cluster as a cofactor.

It carries out the reaction 5-amino-1-(5-phospho-beta-D-ribosyl)imidazole + S-adenosyl-L-methionine = 4-amino-2-methyl-5-(phosphooxymethyl)pyrimidine + CO + 5'-deoxyadenosine + formate + L-methionine + 3 H(+). It participates in cofactor biosynthesis; thiamine diphosphate biosynthesis. Functionally, catalyzes the synthesis of the hydroxymethylpyrimidine phosphate (HMP-P) moiety of thiamine from aminoimidazole ribotide (AIR) in a radical S-adenosyl-L-methionine (SAM)-dependent reaction. The protein is Phosphomethylpyrimidine synthase of Corynebacterium efficiens (strain DSM 44549 / YS-314 / AJ 12310 / JCM 11189 / NBRC 100395).